We begin with the raw amino-acid sequence, 472 residues long: MIIKTRFAPSPTGPLHIGSVRTALYAWLFAKSMNGKFVLRIEDTDKRRSTNAFTSEIINNLEWLGLNWDEGPYFQSDRLEYYRNIIKKMVEAGLAYKCYCTNDRLLKLRKFQISLGKKPKYDRKCRYLVKKDILSTDYVIRFCNPDFGCVTFCDKIRGKISIENKELDDLVIQRADGIPTYNFCVVIDDRDMNITHVIRGEDHISNTPRQINILRALNANIPIYAHVSMVLSEDKQKLSKRNNTITSISEYRLCGYLPESLLNYIVRLGWSHGNQEIFSISEMIKYFTLESLNKSSSCLNKKKLLWLNRFYINNLPETVIKKHLQYQFNKNNIDYKNDSDLLKLVKLLGSRYYTLQEIVDYSRCFYNKSICFNSNIMSKHLDNSSKLILKKIYDKFLDLEVWNVEVIRSLLNSSVCELQISFKKVSMTIRIAVTGHVFSPNLCSVICFLGKNKFLLRIKEALLYIKNMCFEV.

Positions 9–19 (PSPTGPLHIGS) match the 'HIGH' region motif. Positions 237–241 (KLSKR) match the 'KMSKS' region motif. K240 is a binding site for ATP.

It belongs to the class-I aminoacyl-tRNA synthetase family. Glutamate--tRNA ligase type 1 subfamily. Monomer.

It localises to the cytoplasm. It carries out the reaction tRNA(Glu) + L-glutamate + ATP = L-glutamyl-tRNA(Glu) + AMP + diphosphate. Catalyzes the attachment of glutamate to tRNA(Glu) in a two-step reaction: glutamate is first activated by ATP to form Glu-AMP and then transferred to the acceptor end of tRNA(Glu). This is Glutamate--tRNA ligase from Buchnera aphidicola subsp. Baizongia pistaciae (strain Bp).